A 252-amino-acid polypeptide reads, in one-letter code: 5'-nucleotidase SurE (252 aa).

Residues Asp8, Asp9, Ser40, and Asn92 each contribute to the a divalent metal cation site.

It belongs to the SurE nucleotidase family. A divalent metal cation serves as cofactor.

It localises to the cytoplasm. The catalysed reaction is a ribonucleoside 5'-phosphate + H2O = a ribonucleoside + phosphate. Its function is as follows. Nucleotidase that shows phosphatase activity on nucleoside 5'-monophosphates. The sequence is that of 5'-nucleotidase SurE from Chelativorans sp. (strain BNC1).